The primary structure comprises 1381 residues: Hepatocyte growth factor receptor (1381 aa).

The signal sequence occupies residues 1–24; it reads MKAPAVLVPGILVLLFTLVQRSNG. At 25–932 the chain is on the extracellular side; that stretch reads ECKEALAKSE…VIVQPDQNFT (908 aa). In terms of domain architecture, Sema spans 27–515; that stretch reads KEALAKSEMN…TGKKITKIPL (489 aa). Asn-45 is a glycosylation site (N-linked (GlcNAc...) asparagine). 4 disulfides stabilise this stretch: Cys-95–Cys-101, Cys-98–Cys-160, Cys-133–Cys-141, and Cys-172–Cys-175. N-linked (GlcNAc...) asparagine glycosylation occurs at Asn-106. Asn-149 is a glycosylation site (N-linked (GlcNAc...) asparagine). N-linked (GlcNAc...) asparagine glycosylation is present at Asn-202. Disulfide bonds link Cys-298–Cys-363 and Cys-385–Cys-397. 2 N-linked (GlcNAc...) asparagine glycosylation sites follow: Asn-399 and Asn-405. 4 cysteine pairs are disulfide-bonded: Cys-520–Cys-538, Cys-526–Cys-561, Cys-529–Cys-545, and Cys-541–Cys-551. 3 IPT/TIG domains span residues 563–655, 657–739, and 742–836; these read PAIY…FSYV, PIIT…FSYR, and PIVY…LIYV. O-linked (Man) threonine glycosylation occurs at Thr-582. Asn-607 and Asn-635 each carry an N-linked (GlcNAc...) asparagine glycan. Thr-676 and Thr-761 each carry an O-linked (Man) threonine glycan. N-linked (GlcNAc...) asparagine glycosylation is found at Asn-785, Asn-879, and Asn-930. The chain crosses the membrane as a helical span at residues 933–955; the sequence is GLIAGVVSISIALLLLLGLFLWL. The Cytoplasmic segment spans residues 956 to 1381; the sequence is KKRKQIKDLG…EDNADDEVDT (426 aa). Ser-966 carries the post-translational modification Phosphoserine. Thr-977 carries the post-translational modification Phosphothreonine. Phosphoserine is present on residues Ser-990, Ser-997, and Ser-1000. Tyr-1003 carries the post-translational modification Phosphotyrosine. Positions 1078–1345 constitute a Protein kinase domain; it reads VHFNEVIGRG…RISAIFSTFI (268 aa). ATP-binding positions include 1084-1092 and Lys-1110; that span reads IGRGHFGCV. Asp-1204 (proton acceptor) is an active-site residue. The interval 1212–1381 is interaction with RANBP9; the sequence is LDEKFTVKVA…EDNADDEVDT (170 aa). At Tyr-1230 the chain carries Phosphotyrosine. Phosphotyrosine; by autocatalysis is present on residues Tyr-1234 and Tyr-1235. At Thr-1289 the chain carries Phosphothreonine. Positions 1320–1359 are interaction with MUC20; sequence WHPKAEMRPSFSELVSRISAIFSTFIGEHYVHVNATYVNV. Phosphotyrosine; by autocatalysis occurs at positions 1349 and 1356. Tyr-1365 bears the Phosphotyrosine mark.

The protein belongs to the protein kinase superfamily. Tyr protein kinase family. As to quaternary structure, heterodimer made of an alpha chain (50 kDa) and a beta chain (145 kDa) which are disulfide linked. Binds PLXNB1. Interacts when phosphorylated with downstream effectors including STAT3, PIK3R1, SRC, PCLG1, GRB2 and GAB1. Interacts with SPSB1, SPSB2 and SPSB4. Interacts with INPP5D/SHIP1. When phosphorylated at Tyr-1356, interacts with INPPL1/SHIP2. Interacts with RANBP9 and RANBP10, as well as SPSB1, SPSB2, SPSB3 and SPSB4. SPSB1 binding occurs in the presence and in the absence of HGF, however HGF treatment has a positive effect on this interaction. Interacts with MUC20; prevents interaction with GRB2 and suppresses hepatocyte growth factor-induced cell proliferation. Interacts with GRB10. Interacts with PTPN1 and PTPN2. Interacts with HSP90AA1 and HSP90AB1; the interaction suppresses MET kinase activity. Interacts with tensin TNS3. Interacts (when phosphorylated) with tensin TNS4 (via SH2 domain); the interaction increases MET protein stability by inhibiting MET endocytosis and subsequent lysosomal degradation. Post-translationally, autophosphorylated in response to ligand binding on Tyr-1234 and Tyr-1235 in the kinase domain leading to further phosphorylation of Tyr-1349 and Tyr-1356 in the C-terminal multifunctional docking site. Dephosphorylated by PTPRJ at Tyr-1349 and Tyr-1365. Dephosphorylated by PTPN1 and PTPN2. In terms of processing, ubiquitinated. Ubiquitination by CBL regulates the receptor stability and activity through proteasomal degradation. O-mannosylation of IPT/TIG domains by TMEM260 is required for protein maturation. O-mannosylated residues are composed of single mannose glycans that are not elongated or modified.

Its subcellular location is the membrane. It catalyses the reaction L-tyrosyl-[protein] + ATP = O-phospho-L-tyrosyl-[protein] + ADP + H(+). Its activity is regulated as follows. In its inactive state, the C-terminal tail interacts with the catalytic domain and inhibits the kinase activity. Upon ligand binding, the C-terminal tail is displaced and becomes phosphorylated, thus increasing the kinase activity. Receptor tyrosine kinase that transduces signals from the extracellular matrix into the cytoplasm by binding to hepatocyte growth factor/HGF ligand. Regulates many physiological processes including proliferation, scattering, morphogenesis and survival. Ligand binding at the cell surface induces autophosphorylation of MET on its intracellular domain that provides docking sites for downstream signaling molecules. Following activation by ligand, interacts with the PI3-kinase subunit PIK3R1, PLCG1, SRC, GRB2, STAT3 or the adapter GAB1. Recruitment of these downstream effectors by MET leads to the activation of several signaling cascades including the RAS-ERK, PI3 kinase-AKT, or PLCgamma-PKC. The RAS-ERK activation is associated with the morphogenetic effects while PI3K/AKT coordinates prosurvival effects. During embryonic development, MET signaling plays a role in gastrulation, development and migration of muscles and neuronal precursors, angiogenesis and kidney formation. In adults, participates in wound healing as well as organ regeneration and tissue remodeling. Also promotes differentiation and proliferation of hematopoietic cells. The polypeptide is Hepatocyte growth factor receptor (MET) (Papio anubis (Olive baboon)).